The following is a 319-amino-acid chain: ATP-dependent 6-phosphofructokinase (319 aa).

ATP is bound at residue G11. Residue 21 to 25 (RAVVR) participates in ADP binding. Residues 72-73 (RC) and 102-105 (GDGS) each bind ATP. D103 contacts Mg(2+). 125 to 127 (TID) contributes to the substrate binding site. Residue D127 is the Proton acceptor of the active site. R154 serves as a coordination point for ADP. Substrate-binding positions include R162 and 169–171 (MGR). ADP-binding positions include 185–187 (GAE), R211, and 213–215 (KKH). Residues E222, R243, and 249–252 (HVQR) each bind substrate.

It belongs to the phosphofructokinase type A (PFKA) family. ATP-dependent PFK group I subfamily. Prokaryotic clade 'B1' sub-subfamily. As to quaternary structure, homotetramer. The cofactor is Mg(2+).

The protein localises to the cytoplasm. It catalyses the reaction beta-D-fructose 6-phosphate + ATP = beta-D-fructose 1,6-bisphosphate + ADP + H(+). It functions in the pathway carbohydrate degradation; glycolysis; D-glyceraldehyde 3-phosphate and glycerone phosphate from D-glucose: step 3/4. Allosterically activated by ADP and other diphosphonucleosides, and allosterically inhibited by phosphoenolpyruvate. Functionally, catalyzes the phosphorylation of D-fructose 6-phosphate to fructose 1,6-bisphosphate by ATP, the first committing step of glycolysis. This is ATP-dependent 6-phosphofructokinase from Geobacillus kaustophilus (strain HTA426).